The primary structure comprises 529 residues: Bifunctional purine biosynthesis protein PurH (529 aa).

The MGS-like domain occupies 1–148 (MQQRRPVRRA…KNHKDVAIVV (148 aa)).

This sequence belongs to the PurH family.

The enzyme catalyses (6R)-10-formyltetrahydrofolate + 5-amino-1-(5-phospho-beta-D-ribosyl)imidazole-4-carboxamide = 5-formamido-1-(5-phospho-D-ribosyl)imidazole-4-carboxamide + (6S)-5,6,7,8-tetrahydrofolate. The catalysed reaction is IMP + H2O = 5-formamido-1-(5-phospho-D-ribosyl)imidazole-4-carboxamide. It functions in the pathway purine metabolism; IMP biosynthesis via de novo pathway; 5-formamido-1-(5-phospho-D-ribosyl)imidazole-4-carboxamide from 5-amino-1-(5-phospho-D-ribosyl)imidazole-4-carboxamide (10-formyl THF route): step 1/1. It participates in purine metabolism; IMP biosynthesis via de novo pathway; IMP from 5-formamido-1-(5-phospho-D-ribosyl)imidazole-4-carboxamide: step 1/1. This chain is Bifunctional purine biosynthesis protein PurH, found in Salmonella agona (strain SL483).